The following is a 167-amino-acid chain: NAD(P)H-quinone oxidoreductase subunit I, chloroplastic (167 aa).

4Fe-4S ferredoxin-type domains follow at residues 55 to 84 and 95 to 124; these read GRIH…VDWK and LNYS…MTEE. Residues C64, C67, C70, C74, C104, C107, C110, and C114 each contribute to the [4Fe-4S] cluster site.

The protein belongs to the complex I 23 kDa subunit family. In terms of assembly, NDH is composed of at least 16 different subunits, 5 of which are encoded in the nucleus. [4Fe-4S] cluster serves as cofactor.

Its subcellular location is the plastid. It is found in the chloroplast thylakoid membrane. The enzyme catalyses a plastoquinone + NADH + (n+1) H(+)(in) = a plastoquinol + NAD(+) + n H(+)(out). It catalyses the reaction a plastoquinone + NADPH + (n+1) H(+)(in) = a plastoquinol + NADP(+) + n H(+)(out). Its function is as follows. NDH shuttles electrons from NAD(P)H:plastoquinone, via FMN and iron-sulfur (Fe-S) centers, to quinones in the photosynthetic chain and possibly in a chloroplast respiratory chain. The immediate electron acceptor for the enzyme in this species is believed to be plastoquinone. Couples the redox reaction to proton translocation, and thus conserves the redox energy in a proton gradient. The polypeptide is NAD(P)H-quinone oxidoreductase subunit I, chloroplastic (Arabis hirsuta (Hairy rock-cress)).